The chain runs to 162 residues: Succinate dehydrogenase assembly factor 2, mitochondrial (162 aa).

A mitochondrion-targeting transit peptide spans 1 to 35 (MHNMFPALTKTLSLQGYKIINSQTGSAAWSCGRRW).

Belongs to the SDHAF2 family. As to quaternary structure, interacts with SDH1 within the SDH catalytic dimer.

The protein resides in the mitochondrion matrix. In terms of biological role, plays an essential role in the assembly of succinate dehydrogenase (SDH), an enzyme complex (also referred to as respiratory complex II) that is a component of both the tricarboxylic acid (TCA) cycle and the mitochondrial electron transport chain, and which couples the oxidation of succinate to fumarate with the reduction of ubiquinone (coenzyme Q) to ubiquinol. Required for flavinylation (covalent attachment of FAD) of the flavoprotein subunit SDH1 of the SDH catalytic dimer. It is unclear whether it participates in the chemistry of FAD attachment (enzymatic function) or acts as a chaperone that maintains SDH1 in a conformation that is susceptible to autocatalytic FAD attachment. Does not bind FAD or FADH(2) in vitro. Involved in sporulation. Required for the full activation of the early meiotic inducer IME1. The protein is Succinate dehydrogenase assembly factor 2, mitochondrial of Saccharomyces cerevisiae (strain ATCC 204508 / S288c) (Baker's yeast).